The following is a 316-amino-acid chain: Melanocyte-stimulating hormone receptor (316 aa).

Topologically, residues 1 to 37 (MPMQGAQRKLLGSLNSTPTATSNLGLAANHTGAPCLE) are extracellular. An N-linked (GlcNAc...) asparagine glycan is attached at Asn29. The helical transmembrane segment at 38–63 (VSIPDGLFLSLGLVSLVENVLVVAAI) threads the bilayer. Residues 64–72 (AKNRNLHSS) are Cytoplasmic-facing. Residues 73 to 93 (MYCFICCLALSDLLVSGSNML) traverse the membrane as a helical segment. The Extracellular portion of the chain corresponds to 94-118 (ETAVILLLETGALATRTSVVQQLHN). Residues 119-140 (TINVLTCSSMLCSLCFLGAIAV) form a helical membrane-spanning segment. The Cytoplasmic portion of the chain corresponds to 141-163 (DRYISIFYALRYHSIMTLPRAQR). The helical transmembrane segment at 164-183 (AIAAIWVASVLSSTLFITYY) threads the bilayer. Over 184 to 191 (DHAAVLLC) the chain is Extracellular. A helical membrane pass occupies residues 192 to 211 (LVVFFLAMLVLMAVLYVHML). Topologically, residues 212-240 (ARACQHAHGIIRLHKRQTPAHQAFGLRGA) are cytoplasmic. A helical membrane pass occupies residues 241–266 (ATLTILLGIFFLCWGPFFLHLTLVVF). The Extracellular segment spans residues 267–279 (CPQHLTCSCIFKN). Residues 280–300 (FKVFLTLIICNTIIDPLIYAF) form a helical membrane-spanning segment. Over 301–316 (RSQELRRTLKEVLCSW) the chain is Cytoplasmic. Residue Cys314 is the site of S-palmitoyl cysteine attachment.

This sequence belongs to the G-protein coupled receptor 1 family. As to quaternary structure, interacts with MGRN1, but does not undergo MGRN1-mediated ubiquitination; this interaction competes with GNAS-binding and thus inhibits agonist-induced cAMP production. Interacts with OPN3; the interaction results in a decrease in MC1R-mediated cAMP signaling and ultimately a decrease in melanin production in melanocytes.

It localises to the cell membrane. In terms of biological role, receptor for MSH (alpha, beta and gamma) and ACTH. The activity of this receptor is mediated by G proteins which activate adenylate cyclase. Mediates melanogenesis, the production of eumelanin (black/brown) and phaeomelanin (red/yellow), via regulation of cAMP signaling in melanocytes. In Saguinus geoffroyi (Geoffroy's tamarin), this protein is Melanocyte-stimulating hormone receptor (MC1R).